Consider the following 490-residue polypeptide: Phosphoglucosamine mutase (490 aa).

S139 functions as the Phosphoserine intermediate in the catalytic mechanism. Positions 139, 279, 281, and 283 each coordinate Mg(2+). S139 is modified (phosphoserine).

This sequence belongs to the phosphohexose mutase family. It depends on Mg(2+) as a cofactor. Activated by phosphorylation.

It carries out the reaction alpha-D-glucosamine 1-phosphate = D-glucosamine 6-phosphate. In terms of biological role, catalyzes the conversion of glucosamine-6-phosphate to glucosamine-1-phosphate. This Nostoc punctiforme (strain ATCC 29133 / PCC 73102) protein is Phosphoglucosamine mutase.